The chain runs to 335 residues: UPF0284 protein TON_0688 (335 aa).

Belongs to the UPF0284 family.

The chain is UPF0284 protein TON_0688 from Thermococcus onnurineus (strain NA1).